A 390-amino-acid polypeptide reads, in one-letter code: GTPase Obg/CgtA (390 aa).

In terms of domain architecture, Obg spans 1–159 (MKFVDEAVIK…RDIRLELLLL (159 aa)). Residues 160 to 333 (ADVGMLGMPN…LCMKLAEFMD (174 aa)) enclose the OBG-type G domain. Residues 166-173 (GMPNAGKS), 191-195 (FTTLV), 213-216 (DIPG), 283-286 (NKVD), and 314-316 (SAA) each bind GTP. Mg(2+) is bound by residues serine 173 and threonine 193.

It belongs to the TRAFAC class OBG-HflX-like GTPase superfamily. OBG GTPase family. As to quaternary structure, monomer. Interacts with SpoT (AC Q9KNM2) in a yeast 2-hybrid assay. Mg(2+) serves as cofactor.

Its subcellular location is the cytoplasm. Its function is as follows. Depletion experiments lead to gene down regulation and a dramatic increase in ppGpp levels, like those seen in the stringent response. There is no change in cell morphology in depletion experiments, but cells are very sensitive to the DNA-damaging agent hydroxyurea and are very elongated. Overexpression reduces growth and leads to elongated cells. Overexpression of proteins with C-terminal deletions of 29 or 62 amino acids showed fewer elongated cells. An essential GTPase which binds GTP, GDP and possibly (p)ppGpp with moderate affinity, with high nucleotide exchange rates and a fairly low GTP hydrolysis rate. It may play a role in control of the cell cycle, stress response, ribosome biogenesis and in those bacteria that undergo differentiation, in morphogenesis control. GTPase activity is stimulated by 50S ribosomal subunits. This chain is GTPase Obg/CgtA, found in Vibrio cholerae serotype O1 (strain ATCC 39315 / El Tor Inaba N16961).